The primary structure comprises 245 residues: Cysteine-rich secretory protein 3 (245 aa).

The signal sequence occupies residues 1-20 (MTLFPVLLFLVAGLLPSFPA). The region spanning 43–171 (VNKHNELRRA…VLKYYYVCQY (129 aa)) is the SCP domain. Disulfide bonds link C191–C198, C194–C203, C207–C240, C216–C234, and C225–C238. The ShKT domain occupies 207–240 (CKYEDLYSNCKSLKLTLTCKHQLVRDSCKASCNC). An N-linked (GlcNAc...) asparagine glycan is attached at N239.

It belongs to the CRISP family. Interacts with A1BG. In terms of tissue distribution, salivary gland, pancreas and prostate &gt; epididymis, ovary, thymus and colon.

It is found in the secreted. The sequence is that of Cysteine-rich secretory protein 3 (CRISP3) from Homo sapiens (Human).